Here is a 292-residue protein sequence, read N- to C-terminus: Poly(U)-specific endoribonuclease-A (292 aa).

The EndoU domain maps to 8 to 285 (LNHELSKLFN…IGTAYPVLLS (278 aa)). Catalysis depends on residues His162, His178, and Lys224.

Belongs to the ENDOU family. In terms of assembly, monomer. The cofactor is Mn(2+).

It is found in the nucleus. It carries out the reaction uridylyl-uridylyl-ribonucleotide-RNA = a 3'-end uridylyl-2',3'-cyclophospho-uridine-RNA + a 5'-end dephospho-ribonucleoside-RNA. Poly(U)-specific endoribonuclease involved in the processing of intron-encoded box C/D snoRNAs, such as U16 and U86. Releases products that have 2',3'-cyclic phosphate termini at the 3'-end. This Xenopus laevis (African clawed frog) protein is Poly(U)-specific endoribonuclease-A (endou-a).